The primary structure comprises 326 residues: Zinc transporter 11 (326 aa).

The signal sequence occupies residues 1 to 20 (MSRSLVFFFLFLVLVVPCLS). Residues 21–49 (HGTGGDHDDDEASHVKSSDLKSKSLISVK) are Extracellular-facing. The helical transmembrane segment at 50–70 (IACLVIIFVLTFISGVSPYFL) threads the bilayer. Topologically, residues 71–75 (KWSQG) are cytoplasmic. The chain crosses the membrane as a helical span at residues 76-96 (FLVLGTQFAGGVFLATALMHF). At 97-121 (LSDADETFRGLLTAEGESEPSPAYP) the chain is on the extracellular side. The helical transmembrane segment at 122–142 (FAYMLACAGFMLTMLADSVIA) threads the bilayer. Residues 143–174 (HIYSKTQNDLELQGEDKSNQRSATTETSIGDS) lie on the Cytoplasmic side of the membrane. Residues 175 to 195 (ILLIVALCFHSVFEGIAIGIS) traverse the membrane as a helical segment. Over 196–203 (ETKSDAWR) the chain is Extracellular. Residues 204–224 (ALWTITLHKIFAAIAMGIALL) traverse the membrane as a helical segment. Topologically, residues 225–235 (RMIPDRPLFSS) are cytoplasmic. Residues 236–256 (ITYSFAFAISSPIGVAIGIVI) form a helical membrane-spanning segment. Residues 257–262 (DATTQG) are Extracellular-facing. The chain crosses the membrane as a helical span at residues 263–283 (SIADWIFALSMSLACGVFVYV). At 284-305 (SVNHLLAKGYRPNKKVHVDEPR) the chain is on the cytoplasmic side. A helical transmembrane segment spans residues 306 to 326 (YKFLAVLFGVVVIAIVMIWDT).

It belongs to the ZIP transporter (TC 2.A.5) family.

It is found in the cell membrane. Probably mediates zinc uptake from the rhizosphere. This chain is Zinc transporter 11 (ZIP11), found in Arabidopsis thaliana (Mouse-ear cress).